The chain runs to 61 residues: Large ribosomal subunit protein uL30 (61 aa).

Belongs to the universal ribosomal protein uL30 family. As to quaternary structure, part of the 50S ribosomal subunit.

This chain is Large ribosomal subunit protein uL30, found in Chlorobaculum tepidum (strain ATCC 49652 / DSM 12025 / NBRC 103806 / TLS) (Chlorobium tepidum).